The primary structure comprises 271 residues: L-aspartate dehydrogenase (271 aa).

The NAD(+) site is built by A124 and N192. H222 is an active-site residue.

The protein belongs to the L-aspartate dehydrogenase family.

It carries out the reaction L-aspartate + NADP(+) + H2O = oxaloacetate + NH4(+) + NADPH + H(+). It catalyses the reaction L-aspartate + NAD(+) + H2O = oxaloacetate + NH4(+) + NADH + H(+). The protein operates within cofactor biosynthesis; NAD(+) biosynthesis; iminoaspartate from L-aspartate (dehydrogenase route): step 1/1. Functionally, specifically catalyzes the NAD or NADP-dependent dehydrogenation of L-aspartate to iminoaspartate. The sequence is that of L-aspartate dehydrogenase from Methanosarcina barkeri (strain Fusaro / DSM 804).